A 402-amino-acid chain; its full sequence is Clusterin-associated protein 1 (402 aa).

Residues 187-297 are a coiled coil; sequence KTKDLLNNVA…KEEEKRLLKS (111 aa). The tract at residues 292-402 is disordered; that stretch reads KRLLKSGSND…EPLDESDNDF (111 aa). 2 stretches are compositionally biased toward acidic residues: residues 301 to 317 and 349 to 377; these read DDSD…DSEL and DSDE…EDES. A phosphoserine mark is found at Ser-303, Ser-313, and Ser-315. Position 398 is a phosphoserine (Ser-398).

This sequence belongs to the CLUAP1 family. Interacts with CLU/clusterin. Interacts with UBXN10; the interaction is direct.

It is found in the cell projection. It localises to the cilium. The protein resides in the nucleus. Required for cilia biogenesis. Appears to function within the multiple intraflagellar transport complex B (IFT-B). Key regulator of hedgehog signaling. The sequence is that of Clusterin-associated protein 1 (Cluap1) from Rattus norvegicus (Rat).